The primary structure comprises 220 residues: Large ribosomal subunit protein eL15 (220 aa).

Belongs to the eukaryotic ribosomal protein eL15 family.

This is Large ribosomal subunit protein eL15 from Staphylothermus marinus (strain ATCC 43588 / DSM 3639 / JCM 9404 / F1).